A 115-amino-acid polypeptide reads, in one-letter code: Colicin-Ib immunity protein (115 aa).

3 helical membrane passes run 7–27 (VKYLLKSLIPILIILTVFYLG), 38–58 (FYAFIGCIISAITFPFSMRII), and 87–107 (IFELFCFVISVPVVAIYLIFI).

The protein localises to the cell membrane. Functionally, this protein is able to protect a cell, which harbors the plasmid IncI1 ColIb-P9 encoding colicin Ib, against colicin Ib. The sequence is that of Colicin-Ib immunity protein from Escherichia coli.